A 367-amino-acid polypeptide reads, in one-letter code: D-alanine--D-alanine ligase (367 aa).

Residues 150 to 357 (KKLLASAGLP…YPTLLATMVE (208 aa)) form the ATP-grasp domain. 178–233 (RERLGLPVFVKPSRGGSSIGVSRVTAWDELPAAIELARRHDPKVIIEAAVPGRELE) provides a ligand contact to ATP. Asp312, Glu324, and Asn326 together coordinate Mg(2+).

Belongs to the D-alanine--D-alanine ligase family. Requires Mg(2+) as cofactor. It depends on Mn(2+) as a cofactor.

Its subcellular location is the cytoplasm. It carries out the reaction 2 D-alanine + ATP = D-alanyl-D-alanine + ADP + phosphate + H(+). It participates in cell wall biogenesis; peptidoglycan biosynthesis. Functionally, cell wall formation. This Mycolicibacterium gilvum (strain PYR-GCK) (Mycobacterium gilvum (strain PYR-GCK)) protein is D-alanine--D-alanine ligase.